The primary structure comprises 241 residues: Large ribosomal subunit protein uL3 (241 aa).

Disordered stretches follow at residues 140–168 (SHRSIGSTGGRQDPGKTFKNKKMPGHMGD) and 216–241 (APKPGAFKLNGSEAAPAAEAVNEEGA). Residue Q151 is modified to N5-methylglutamine.

The protein belongs to the universal ribosomal protein uL3 family. As to quaternary structure, part of the 50S ribosomal subunit. Forms a cluster with proteins L14 and L19. Methylated by PrmB.

Its function is as follows. One of the primary rRNA binding proteins, it binds directly near the 3'-end of the 23S rRNA, where it nucleates assembly of the 50S subunit. The protein is Large ribosomal subunit protein uL3 of Xanthobacter autotrophicus (strain ATCC BAA-1158 / Py2).